A 195-amino-acid chain; its full sequence is Small ribosomal subunit protein uS7 (195 aa).

This sequence belongs to the universal ribosomal protein uS7 family. In terms of assembly, part of the 30S ribosomal subunit.

Functionally, one of the primary rRNA binding proteins, it binds directly to 16S rRNA where it nucleates assembly of the head domain of the 30S subunit. Is located at the subunit interface close to the decoding center. In Sulfolobus acidocaldarius (strain ATCC 33909 / DSM 639 / JCM 8929 / NBRC 15157 / NCIMB 11770), this protein is Small ribosomal subunit protein uS7.